The following is a 244-amino-acid chain: Small ribosomal subunit protein uS3 (244 aa).

Residues 38–106 form the KH type-2 domain; it reads IRKYLNARLA…DIQINIFEVK (69 aa). A disordered region spans residues 217 to 244; sequence TQSKESGRGNNGGNNGGGKNFKRKKNNR. Residues 225–235 show a composition bias toward gly residues; the sequence is GNNGGNNGGGK.

It belongs to the universal ribosomal protein uS3 family. As to quaternary structure, part of the 30S ribosomal subunit. Forms a tight complex with proteins S10 and S14.

Binds the lower part of the 30S subunit head. Binds mRNA in the 70S ribosome, positioning it for translation. The sequence is that of Small ribosomal subunit protein uS3 from Bacteroides fragilis (strain ATCC 25285 / DSM 2151 / CCUG 4856 / JCM 11019 / LMG 10263 / NCTC 9343 / Onslow / VPI 2553 / EN-2).